The sequence spans 668 residues: S-adenosyl-L-methionine-dependent tRNA 4-demethylwyosine synthase TYW1B (668 aa).

One can recognise a Flavodoxin-like domain in the interval 37–191; sequence CVQIVIEMQG…NFRAWKTKFI (155 aa). FMN contacts are provided by residues 43-47 and 130-162; these read EMQGF and VFGLGNSAYASHFNKVGKNVDKWLWMLGVHRVM. The tract at residues 202–269 is disordered; sequence RKKSCGGHCK…QSLNSIVDVE (68 aa). Basic and acidic residues-rich tracts occupy residues 213-223 and 233-243; these read GKCESHQHGSE and DELHHRDTKEE. Acidic residues predominate over residues 244 to 255; it reads EPFESSSEEEFG. The Radical SAM core domain maps to 336 to 580; sequence LWNESHRCME…VDLIPEYEIA (245 aa). [4Fe-4S] cluster-binding residues include Cys-352, Cys-356, and Cys-359.

Belongs to the TYW1 family. Requires [4Fe-4S] cluster as cofactor.

It carries out the reaction N(1)-methylguanosine(37) in tRNA(Phe) + pyruvate + S-adenosyl-L-methionine = 4-demethylwyosine(37) in tRNA(Phe) + 5'-deoxyadenosine + L-methionine + CO2 + H2O. It participates in tRNA modification; wybutosine-tRNA(Phe) biosynthesis. Probable component of the wybutosine biosynthesis pathway. Wybutosine is a hyper modified guanosine with a tricyclic base found at the 3'-position adjacent to the anticodon of eukaryotic phenylalanine tRNA. Catalyzes the condensation of N-methylguanine with 2 carbon atoms from pyruvate to form the tricyclic 4-demethylwyosine, an intermediate in wybutosine biosynthesis. The chain is S-adenosyl-L-methionine-dependent tRNA 4-demethylwyosine synthase TYW1B (TYW1B) from Homo sapiens (Human).